The sequence spans 446 residues: Fatty acid desaturase 2 (446 aa).

Topologically, residues 1 to 132 are cytoplasmic; the sequence is MGMGGQSGEG…EDMRLFKSNP (132 aa). The Cytochrome b5 heme-binding domain maps to 20-97; sequence EAQYSWEEIQ…LKPLYIGELA (78 aa). Residues 133 to 153 form a helical membrane-spanning segment; that stretch reads AFFIFYLFHILLIEFLAWCTL. A topological domain (lumenal) is located at residue His154. A helical transmembrane segment spans residues 155–175; that stretch reads YLGTGWIPAIITVLLLTISQA. Residues 176-265 are Cytoplasmic-facing; it reads QAGWLQHDFG…IKYLPYNHQH (90 aa). Residues 182-186 carry the Histidine box-1 motif; it reads HDFGH. The Histidine box-2 motif lies at 219-223; that stretch reads HFQHH. Residues 266 to 286 form a helical membrane-spanning segment; sequence LYFFLIGPPLLIPVYFTVQII. Over 287–307 the chain is Lumenal; the sequence is KTMIARKDWVDLAWSVSYYVR. A helical membrane pass occupies residues 308–328; it reads FFFTFVPFFGVLGSLALLNAV. Residues 329 to 446 lie on the Cytoplasmic side of the membrane; sequence RFFESHWFVW…QLWLDAYLHK (118 aa). Residues 384-388 carry the Histidine box-3 motif; the sequence is QIEHH.

This sequence belongs to the fatty acid desaturase type 1 family.

Its subcellular location is the endoplasmic reticulum membrane. Its pathway is lipid metabolism; polyunsaturated fatty acid biosynthesis. Component of a lipid metabolic pathway that catalyzes biosynthesis of highly unsaturated fatty acids (HUFA) from precursor essential polyunsaturated fatty acids (PUFA) linoleic acid (LA) (18:2n-6) and alpha-linolenic acid (ALA) (18:3n-3). Catalyzes the first and rate limiting step in this pathway which is the desaturation of LA (18:2n-6) and ALA (18:3n-3) into gamma-linoleic acid (GLA) (18:3n-6) and stearidonic acid (18:4n-3) respectively and other desaturation steps. Highly unsaturated fatty acids (HUFA) play pivotal roles in many biological functions. The sequence is that of Fatty acid desaturase 2 (fads2) from Xenopus laevis (African clawed frog).